Here is a 123-residue protein sequence, read N- to C-terminus: Cyclic ether formation enzyme xenC (123 aa).

An N-terminal signal peptide occupies residues 1 to 24 (MSSLLLSDVLSYGIFGFSALCVQA). The next 2 membrane-spanning stretches (helical) occupy residues 58-78 (SALR…LWSP) and 102-122 (LGES…AILV).

It belongs to the cyclic ether formation enzyme xenC family.

It localises to the membrane. It participates in mycotoxin biosynthesis. In terms of biological role, cyclic ether formation enzyme; part of the gene cluster that mediates the biosynthesis of xenoacremones such as xenoacremone A, a compound that shows inhibitory activity toward the PI3K/AKT signaling pathway and which has the ability to induce apoptosis of A549 lung cancer cells. Within the pathway, cooperation of the hybrid PKS-NRPS xenE and the trans-acting enoyl reductase xenG is responsible for the formation of the reduced tyrosine-nonaketide derivative. The alpha/beta hydrolase xenA then accelerates intramolecular nucleophilic attack to give a pyrrolidone derivative. Subsequently, three enzymes, xenF, xenD, and xenC, coordinately participate in the conversion to xenoacremone B. XenF catalyzes sigmatropic rearrangement to form an A-ring, which leads to an unusual intermediate with a hexane ring, which is required for the formation of the tricarbocyclic product. Epoxidation catalyzed by xenD and the formation of the paracyclophane ether catalyzed by xenC initiate a spontaneous intramolecular Diels-Alder (IMDA) reaction to yield xenoacremone B. Spontaneous hydration of xenoacremone B leads to the formation of xenoacremone A, which undergoes subsequent methylation to afford xenoacremone C. This is Cyclic ether formation enzyme xenC from Xenoacremonium sinensis (Endophyte fungus).